The chain runs to 244 residues: Extracellular superoxide dismutase [Cu-Zn] (244 aa).

A signal peptide spans 1 to 18 (MLALVCSCLLLAALPADT). 2 disulfide bridges follow: cysteine 67-cysteine 212 and cysteine 129-cysteine 211. Asparagine 111 carries N-linked (GlcNAc...) asparagine glycosylation. Histidine 118, histidine 120, and histidine 135 together coordinate Cu cation. Zn(2+) is bound by residues histidine 135, histidine 143, histidine 146, and aspartate 149. Position 185 (histidine 185) interacts with Cu cation. The interval 221–244 (PWARQAQEHAERKKRRRESECKAA) is disordered. The segment covering 226 to 244 (AQEHAERKKRRRESECKAA) has biased composition (basic and acidic residues).

It belongs to the Cu-Zn superoxide dismutase family. Homotetramer. Directly interacts with ATP7A; this interaction is copper-dependent and is required for SOD3 activity. The cofactor is Cu cation. Requires Zn(2+) as cofactor.

It is found in the secreted. The protein localises to the extracellular space. Its subcellular location is the golgi apparatus. It localises to the trans-Golgi network. It catalyses the reaction 2 superoxide + 2 H(+) = H2O2 + O2. Its function is as follows. Protect the extracellular space from toxic effect of reactive oxygen intermediates by converting superoxide radicals into hydrogen peroxide and oxygen. This is Extracellular superoxide dismutase [Cu-Zn] (SOD3) from Oryctolagus cuniculus (Rabbit).